Here is a 175-residue protein sequence, read N- to C-terminus: Snake venom metalloproteinase BpMP-1 (175 aa).

The Peptidase M12B domain maps to 1–175 (YIELAVVADH…KHNPQCILNK (175 aa)). Positions 3 and 74 each coordinate Ca(2+). Intrachain disulfides connect Cys-98–Cys-171, Cys-131–Cys-155, and Cys-133–Cys-138. Zn(2+) is bound at residue His-117. The active site involves Glu-118. Zn(2+) contacts are provided by His-121 and His-127. Ca(2+) contacts are provided by Cys-171 and Asn-174.

This sequence belongs to the venom metalloproteinase (M12B) family. P-I subfamily. In terms of assembly, monomer. Zn(2+) is required as a cofactor. Expressed by the venom gland.

The protein localises to the secreted. Its activity is regulated as follows. Inhibited by EDTA, 1,10-phenanthroline and beta-mercaptoethanol. Not inhibited by the serine protease inhibitors aprotinin and benzamidin. Its function is as follows. Non-hemorrhagic snake venom zinc metalloprotease that hydrolyzes the Aalpha-chain of fibrinogen, more slowly the Bbeta-chain and shows no effect on the gamma chain. Has no coagulant activity on bovine plasma and fibrinogen. This Bothrops pauloensis (Neuwied's lancehead) protein is Snake venom metalloproteinase BpMP-1.